A 74-amino-acid chain; its full sequence is U5-theraphotoxin-Cg1a (74 aa).

The signal sequence occupies residues methionine 1–alanine 19. A propeptide spanning residues alanine 20–arginine 39 is cleaved from the precursor. 3 cysteine pairs are disulfide-bonded: cysteine 42/cysteine 56, cysteine 49/cysteine 61, and cysteine 55/cysteine 71.

This sequence belongs to the neurotoxin 36 family. 01 subfamily. As to expression, expressed by the venom gland.

It is found in the secreted. Probable ion channel inhibitor. This Chilobrachys guangxiensis (Chinese earth tiger tarantula) protein is U5-theraphotoxin-Cg1a.